The chain runs to 532 residues: Light-independent protochlorophyllide reductase subunit B (532 aa).

Asp36 contributes to the [4Fe-4S] cluster binding site. Catalysis depends on Asp292, which acts as the Proton donor. 428–429 (GL) is a binding site for substrate. A disordered region spans residues 445-486 (EEEEPESISNGHAAAAGSEGGVPDSGEAGDAGDTDGMPWSPD).

The protein belongs to the ChlB/BchB/BchZ family. As to quaternary structure, protochlorophyllide reductase is composed of three subunits; BchL, BchN and BchB. Forms a heterotetramer of two BchB and two BchN subunits. Requires [4Fe-4S] cluster as cofactor.

The catalysed reaction is chlorophyllide a + oxidized 2[4Fe-4S]-[ferredoxin] + 2 ADP + 2 phosphate = protochlorophyllide a + reduced 2[4Fe-4S]-[ferredoxin] + 2 ATP + 2 H2O. It participates in porphyrin-containing compound metabolism; bacteriochlorophyll biosynthesis (light-independent). In terms of biological role, component of the dark-operative protochlorophyllide reductase (DPOR) that uses Mg-ATP and reduced ferredoxin to reduce ring D of protochlorophyllide (Pchlide) to form chlorophyllide a (Chlide). This reaction is light-independent. The NB-protein (BchN-BchB) is the catalytic component of the complex. This is Light-independent protochlorophyllide reductase subunit B from Chlorobium phaeobacteroides (strain BS1).